We begin with the raw amino-acid sequence, 87 residues long: Toxin CsEv2 (87 aa).

Residues 1 to 19 (MNSLLIITACLFLIGTVWA) form the signal peptide. One can recognise an LCN-type CS-alpha/beta domain in the interval 20–85 (KEGYLVNKST…TYPLPNKSCS (66 aa)). Intrachain disulfides connect cysteine 31-cysteine 84, cysteine 35-cysteine 60, cysteine 44-cysteine 65, and cysteine 48-cysteine 67.

The protein belongs to the long (4 C-C) scorpion toxin superfamily. Sodium channel inhibitor family. Beta subfamily. Expressed by the venom gland.

It localises to the secreted. Its function is as follows. Beta toxins bind voltage-independently at site-4 of sodium channels (Nav) and shift the voltage of activation toward more negative potentials thereby affecting sodium channel activation and promoting spontaneous and repetitive firing. Induces immediate paralysis in crickets after injection, with a total paralysis occurring within 15-30 minutes and lasting for 1-2 hours. Is also lethal to vertebrate (chicks) when injected in very high dosages (more that 100 mg/kg). This Centruroides sculpturatus (Arizona bark scorpion) protein is Toxin CsEv2.